The primary structure comprises 62 residues: Large ribosomal subunit protein uL30 (62 aa).

It belongs to the universal ribosomal protein uL30 family. As to quaternary structure, part of the 50S ribosomal subunit.

The chain is Large ribosomal subunit protein uL30 from Geobacillus kaustophilus (strain HTA426).